A 223-amino-acid chain; its full sequence is Gastrula zinc finger protein XlCGF52.1 (223 aa).

C2H2-type zinc fingers lie at residues 6–27 (FTCP…TEDH), 33–55 (FTCM…QRVH), 61–83 (YTCT…ISTH), 89–111 (FPCT…QRIH), 117–139 (FQCL…QRSH), 145–167 (YACS…ERIH), 173–195 (YECN…QKIH), and 201–223 (FTCT…QKIH).

Belongs to the krueppel C2H2-type zinc-finger protein family.

The protein resides in the nucleus. Its function is as follows. May be involved in transcriptional regulation. This Xenopus laevis (African clawed frog) protein is Gastrula zinc finger protein XlCGF52.1.